The chain runs to 1482 residues: Cystic fibrosis transmembrane conductance regulator (1482 aa).

Over 1–77 the chain is Cytoplasmic; sequence MQRSPLEKAS…KLINALRRCF (77 aa). A helical membrane pass occupies residues 78-98; that stretch reads FWRFTFYGIILYLGEVTKAVQ. The region spanning 81-365 is the ABC transmembrane type-1 1 domain; that stretch reads FTFYGIILYL…WAVQTWYDSL (285 aa). Topologically, residues 99–122 are extracellular; the sequence is PLLLGRIIASYDPDNKVERSIAIY. The chain crosses the membrane as a helical span at residues 123 to 146; the sequence is LAVGLCLLFVVRTLLLHPAIFGLH. The Cytoplasmic portion of the chain corresponds to 147-195; that stretch reads HIGMQMRIAMFSLIYKKTLKLSSRVLDKISIGQLVSLLSNNLNKFDEGL. Residues 196–216 form a helical membrane-spanning segment; sequence ALAHFVWIAPLQVTLLMGLLW. Topologically, residues 217–222 are extracellular; that stretch reads DLLQAS. The chain crosses the membrane as a helical span at residues 223–243; the sequence is AFSGLGVLIILACFQAGFGRM. Topologically, residues 244 to 298 are cytoplasmic; that stretch reads MMKYRDQRAGKINERLVITSEMIENIQSVKAYCWEEALEKMIENFRQSELRLTRK. Residues 299–319 traverse the membrane as a helical segment; the sequence is AAYVRYFNSSAFFFSGFFVVF. Residues 320–339 are Extracellular-facing; the sequence is LSVLPYALIKGIILRKIFTT. The helical transmembrane segment at 340-358 threads the bilayer; sequence ISFCIVLRMAVTRQFPWAV. The Cytoplasmic portion of the chain corresponds to 359–859; sequence QTWYDSLGAI…YLRYITVHKR (501 aa). Residues Trp-401, Ser-434, 458-465, and Gln-493 contribute to the ATP site; that span reads GSTGAGKT. The 224-residue stretch at 423-646 folds into the ABC transporter 1 domain; sequence NVDNSLFFSN…RPDFSSKLMG (224 aa). Residue Cys-524 is the site of S-palmitoyl cysteine attachment. Phosphoserine is present on residues Ser-549 and Ser-660. Residues 654 to 832 form a disordered R region region; it reads SAERRNSIIT…EEINEEDLKE (179 aa). Ser-670 carries the post-translational modification Phosphoserine; by PKA. Residue Ser-686 is modified to Phosphoserine. Lys-688 participates in a covalent cross-link: Glycyl lysine isopeptide (Lys-Gly) (interchain with G-Cter in ubiquitin). 2 positions are modified to phosphoserine: Ser-700 and Ser-712. Thr-717 is modified (phosphothreonine). 4 positions are modified to phosphoserine: Ser-737, Ser-768, Ser-796, and Ser-814. Residues 860–880 traverse the membrane as a helical segment; the sequence is LIFVLIWCFVVFLIEVAASLV. One can recognise an ABC transmembrane type-1 2 domain in the interval 860–1156; it reads LIFVLIWCFV…AVNSSIDVDS (297 aa). Residues 881–919 are Extracellular-facing; sequence LLCLLSKVSPEDKGNTTKSANDSSAVIITSTSSFYFLYI. 2 N-linked (GlcNAc...) asparagine glycosylation sites follow: Asn-895 and Asn-901. A discontinuously helical membrane pass occupies residues 920–940; that stretch reads YVGVADTFLALGLFRGLPLVH. Residues 941 to 991 lie on the Cytoplasmic side of the membrane; sequence TLITVSKILHHKMLHSVLQAPMSTLNTLKAGGILNRFSKDIAILDDLLPLT. A helical membrane pass occupies residues 992 to 1012; it reads IFDFIQLLLIVIGAVAVVSIL. The Extracellular portion of the chain corresponds to 1013–1014; it reads KP. The helical transmembrane segment at 1015–1035 threads the bilayer; the sequence is YIFLATVPVIVAFVLLRAYFL. Over 1036 to 1096 the chain is Cytoplasmic; it reads HTSQQLKQLE…TANWFLYLST (61 aa). The helical transmembrane segment at 1097–1117 threads the bilayer; sequence LRWFQMRIEMIFVIFFIAVTF. The Extracellular portion of the chain corresponds to 1118–1131; the sequence is ISILTTGEGEGTVG. Residues 1132–1152 traverse the membrane as a helical segment; sequence IILTLAMNIMSTLQWAVNSSI. At 1153 to 1482 the chain is on the cytoplasmic side; sequence DVDSLMRSVS…TEEEVQDTRL (330 aa). The region spanning 1212-1445 is the ABC transporter 2 domain; sequence MTVKDLTAKY…KSLFRQAISP (234 aa). Residues Tyr-1221 and 1246–1253 each bind ATP; that span reads GRTGSGKS. Residues 1388 to 1482 form an interaction with GORASP2 region; sequence RTLKQAFADC…TEEEVQDTRL (95 aa). Residue Cys-1397 is the site of S-palmitoyl cysteine attachment. Ser-1446 bears the Phosphoserine mark. The disordered stretch occupies residues 1450–1482; sequence KLFPHQNSGKHKSRSKITALKEETEEEVQDTRL. Residues 1472–1482 are compositionally biased toward acidic residues; the sequence is ETEEEVQDTRL. The PDZ-binding signature appears at 1480 to 1482; that stretch reads TRL.

The protein belongs to the ABC transporter superfamily. ABCC family. CFTR transporter (TC 3.A.1.202) subfamily. Monomer; does not require oligomerization for channel activity. May form oligomers in the membrane. Interacts with SLC26A3, SLC26A6 and NHERF1. Interacts with SHANK2. Interacts with MYO6. Interacts (via C-terminus) with GOPC (via PDZ domain); this promotes CFTR internalization and thereby decreases channel activity. Interacts with SLC4A7 through NHERF1. Found in a complex with MYO5B and RAB11A. Interacts with ANO1. Interacts with SLC26A8. Interacts with AHCYL1; the interaction increases CFTR activity. Interacts with CSE1L. The core-glycosylated form interacts with GORASP2 (via PDZ GRASP-type 1 domain) in respone to ER stress. Interacts with MARCHF2; the interaction leads to CFTR ubiqtuitination and degradation. Interacts with ADGRG2. N-glycosylated. In terms of processing, phosphorylated; cAMP treatment promotes phosphorylation and activates the channel. Dephosphorylation decreases the ATPase activity (in vitro). Phosphorylation at PKA sites activates the channel. Phosphorylation at PKC sites enhances the response to phosphorylation by PKA. Phosphorylated by AMPK; this inhibits channel activity. Post-translationally, ubiquitinated, leading to its degradation in the lysosome. Deubiquitination by USP10 in early endosomes enhances its endocytic recycling to the cell membrane. Ubiquitinated by RNF185 during ER stress. Ubiquitinated by MARCHF2.

It is found in the apical cell membrane. Its subcellular location is the early endosome membrane. The protein localises to the cell membrane. The protein resides in the recycling endosome membrane. It localises to the endoplasmic reticulum membrane. It is found in the nucleus. The enzyme catalyses ATP + H2O + closed Cl(-) channel = ADP + phosphate + open Cl(-) channel.. It carries out the reaction chloride(in) = chloride(out). It catalyses the reaction hydrogencarbonate(in) = hydrogencarbonate(out). The catalysed reaction is ATP + H2O = ADP + phosphate + H(+). Its function is as follows. Epithelial ion channel that plays an important role in the regulation of epithelial ion and water transport and fluid homeostasis. Mediates the transport of chloride ions across the cell membrane. Possesses an intrinsic ATPase activity and utilizes ATP to gate its channel; the passive flow of anions through the channel is gated by cycles of ATP binding and hydrolysis by the ATP-binding domains. The ion channel is also permeable to HCO(3)(-); selectivity depends on the extracellular chloride concentration. Exerts its function also by modulating the activity of other ion channels and transporters. Contributes to the regulation of the pH and the ion content of the epithelial fluid layer. Modulates the activity of the epithelial sodium channel (ENaC) complex, in part by regulating the cell surface expression of the ENaC complex. May regulate bicarbonate secretion and salvage in epithelial cells by regulating the transporter SLC4A7. Can inhibit the chloride channel activity of ANO1. Plays a role in the chloride and bicarbonate homeostasis during sperm epididymal maturation and capacitation. This is Cystic fibrosis transmembrane conductance regulator from Dasypus novemcinctus (Nine-banded armadillo).